A 557-amino-acid chain; its full sequence is MEPAAEILVDSPDVIFGPEAIEARYEYRTTRVSREGGVLRVRPTATRFTFRTARQVPRLGVMLVGWGGNNGSTLTAAVLANRLRLTWPTRTGRKEANYYGSLTQAGTVNLGLDGDGREVFVPFSALLPMVAPNDLVFDGWDISSLNLAEAMRRAQVLDCGLQEQLWPHMESLRPRPSVYIPEFIAANQTARADNLIPGTRAQQLEQIRKDIRDFRSSAGLDKVIVLWTANTERFCEVVPGRNDTAENLLRTIQLGLEVSPSTLFAVASILEGCAFLNGSPQNTLVPGALELASQRHVFVGGDDFKSGQTKVKSVLVDFLIGSGLKTMSIVSYNHLGNNDGQNLSAPLQFRSKEVTKSSVVDDMVQSNRVLYAPGEEPDHCVVIKYVPYVGDSKRALDEYTSELMLGGTNTLVLHNTCEDSLLAAPIMLDLVLLTELCQRVSFCTDSDPEPQGFHPVLSVLSFLFKAPLVPPGSPVVNALFRQRSCIENIFRACVGLPPQNHMLLEHKMERPFPGIKPEEVKATSPLPCKKESTPATNGCTGDANGHTQAPTPELSTA.

21 residues coordinate NAD(+): Gly67, Gly68, Asn69, Asn70, Asp141, Ser177, Val178, Gln188, Arg191, Thr228, Ala229, Asn230, Thr231, Gly278, Ser279, Asp303, Ser306, Asn337, Asn338, Asp339, and Lys352. Ser279 carries the phosphoserine modification. Position 357 is a phosphoserine (Ser357). Residues Gly390, Asp391, Asp419, and Ser420 each contribute to the NAD(+) site. Residues 514–557 (GIKPEEVKATSPLPCKKESTPATNGCTGDANGHTQAPTPELSTA) form a disordered region. Residue Ser524 is modified to Phosphoserine. Polar residues predominate over residues 533–557 (TPATNGCTGDANGHTQAPTPELSTA).

It belongs to the myo-inositol 1-phosphate synthase family. In terms of assembly, homotrimer. Requires NAD(+) as cofactor. In terms of processing, phosphorylation at Ser-524 does not appear to affect enzyme activity, and is detected in brain and testis. As to expression, expressed in testis, brain and epididymis (at protein level). Moderately expressed in brain, lung, liver, and kidney. Low expression in heart and spleen. Very low expression in skeletal muscle. Expressed in testis, spleen, heart, brainstem, hippocampus, cerebellum, cortex and amygdala. Absent or very lowly expressed in intestine, lung and muscle. In terms of tissue distribution, expressed in intestine, lung, liver, muscle, testis, spleen, brainstem, hippocampus, cerebellum, cortex and amygdala. Absent or lowly expressed in heart and kidney. As to expression, expressed in intestine (at protein level).

It localises to the cytoplasm. The catalysed reaction is D-glucose 6-phosphate = 1D-myo-inositol 3-phosphate. It participates in polyol metabolism; myo-inositol biosynthesis; myo-inositol from D-glucose 6-phosphate: step 1/2. With respect to regulation, inhibited by 2-deoxyglucitol 6-phosphate (dgtolP) and 2-deoxy-D-glucose 6-phosphate. Inhibited by copper, mercury, cadmium, zinc and copper ions. Activated by potassium and ammonium ions. In terms of biological role, key enzyme in myo-inositol biosynthesis pathway that catalyzes the conversion of glucose 6-phosphate to 1-myo-inositol 1-phosphate in a NAD-dependent manner. Rate-limiting enzyme in the synthesis of all inositol-containing compounds. Functionally, key enzyme in myo-inositol biosynthesis pathway that catalyzes the conversion of glucose 6-phosphate to 1-myo-inositol 1-phosphate in a NAD-dependent manner. Competitively inhibits the function of isoform 1, presumably by competing for NAD cofactor. The protein is Inositol-3-phosphate synthase 1 (Isyna1) of Rattus norvegicus (Rat).